Here is a 197-residue protein sequence, read N- to C-terminus: Peptidyl-tRNA hydrolase (197 aa).

Tyr18 is a binding site for tRNA. The active-site Proton acceptor is His23. Residues Phe69, Asn71, and Asn117 each contribute to the tRNA site.

The protein belongs to the PTH family. Monomer.

The protein resides in the cytoplasm. The enzyme catalyses an N-acyl-L-alpha-aminoacyl-tRNA + H2O = an N-acyl-L-amino acid + a tRNA + H(+). In terms of biological role, hydrolyzes ribosome-free peptidyl-tRNAs (with 1 or more amino acids incorporated), which drop off the ribosome during protein synthesis, or as a result of ribosome stalling. Catalyzes the release of premature peptidyl moieties from peptidyl-tRNA molecules trapped in stalled 50S ribosomal subunits, and thus maintains levels of free tRNAs and 50S ribosomes. This is Peptidyl-tRNA hydrolase from Tolumonas auensis (strain DSM 9187 / NBRC 110442 / TA 4).